The following is a 303-amino-acid chain: Mitochondrial basic amino acids transporter (303 aa).

A run of 6 helical transmembrane segments spans residues 2–22 (ALDF…GHPF), 61–81 (GLGS…GVQG), 96–116 (FLAG…MELA), 153–172 (GMVS…FLTY), 187–207 (LLVP…WLST), and 255–275 (LLRA…VLTY). Solcar repeat units lie at residues 2-86 (ALDF…TLRA), 90-178 (DSPL…LTRA), and 185-275 (DRLL…VLTY). The segment at 282 to 303 (GPEGEAVPAAPAGPALAQPSSL) is disordered. Over residues 284-303 (EGEAVPAAPAGPALAQPSSL) the composition is skewed to low complexity.

Belongs to the mitochondrial carrier (TC 2.A.29) family.

Its subcellular location is the mitochondrion inner membrane. The catalysed reaction is L-lysine(out) + L-arginine(in) = L-lysine(in) + L-arginine(out). The enzyme catalyses L-histidine(out) + L-arginine(in) = L-histidine(in) + L-arginine(out). It catalyses the reaction L-ornithine(in) + L-arginine(out) = L-ornithine(out) + L-arginine(in). It carries out the reaction L-homoarginine(in) + L-arginine(out) = L-homoarginine(out) + L-arginine(in). The catalysed reaction is N(omega)-methyl-L-arginine(in) + L-arginine(out) = N(omega)-methyl-L-arginine(out) + L-arginine(in). The enzyme catalyses L-arginine(in) = L-arginine(out). It catalyses the reaction L-lysine(in) = L-lysine(out). It carries out the reaction L-ornithine(in) = L-ornithine(out). The catalysed reaction is L-histidine(out) = L-histidine(in). Its function is as follows. Mitochondrial transporter of arginine, lysine, homoarginine, methylarginine and, to a much lesser extent, ornithine and histidine. Does not transport carnitine nor acylcarnitines. Functions by both counter-exchange and uniport mechanisms. Plays a physiological role in the import of basic amino acids into mitochondria for mitochondrial protein synthesis and amino acid degradation. This Homo sapiens (Human) protein is Mitochondrial basic amino acids transporter.